We begin with the raw amino-acid sequence, 203 residues long: Recombination protein RecR (203 aa).

The C4-type zinc finger occupies Cys58–Cys73. Residues Ser81–Pro177 enclose the Toprim domain.

Belongs to the RecR family.

Functionally, may play a role in DNA repair. It seems to be involved in an RecBC-independent recombinational process of DNA repair. It may act with RecF and RecO. In Orientia tsutsugamushi (strain Ikeda) (Rickettsia tsutsugamushi), this protein is Recombination protein RecR.